Consider the following 139-residue polypeptide: uncharacterized protein (139 aa).

One can recognise a Globin domain in the interval 1–133 (MLSEETIRVI…LAKTLITLEK (133 aa)).

This sequence belongs to the globin family.

This is an uncharacterized protein from Aquifex aeolicus (strain VF5).